The following is a 589-amino-acid chain: F-box only protein 24 (589 aa).

The F-box domain occupies 23 to 69; that stretch reads PISVQLFPPELVEHIVSFLPVKDLVALGQTCHYFHEVCDAEGVWRRI. An RCC1 repeat occupies 386–435; that stretch reads GRIFMQGNNRYGQLGTGDKMDRGEPTQVHYLQRPIALWCGLNHSLVLSQT. The interval 506-526 is disordered; sequence VGGSPEPSQGAGAPQDPGGTA.

Directly interacts with SKP1 and CUL1.

Functionally, substrate-recognition component of the SCF (SKP1-CUL1-F-box protein)-type E3 ubiquitin ligase complex. This chain is F-box only protein 24 (Fbxo24), found in Mus musculus (Mouse).